The following is an 822-amino-acid chain: Microcephalin (822 aa).

The BRCT 1 domain maps to 10 to 99; that stretch reads AFLKDVVAYV…ALVDESLFPA (90 aa). Disordered regions lie at residues 182–203, 219–243, and 266–295; these read MKEKRENLSPTSSQMLEQSQQN, PLSSDESFASGSHSSFGDSCGDQER, and SSFYGSASPNHLRQPRPQKAPDSPSKESIN. Composition is skewed to polar residues over residues 189 to 203 and 219 to 235; these read LSPTSSQMLEQSQQN and PLSSDESFASGSHSSFG. A phosphoserine mark is found at S273, S290, and S327. At T329 the chain carries Phosphothreonine. Disordered regions lie at residues 335-366, 498-567, and 594-636; these read EHQVRLGPKNSSAKRKRAADLGSSPKGKLKKR, NDSP…SPED, and TGYS…PTRT. Residues 522–541 are compositionally biased toward polar residues; it reads HPDTLSSSAHHITPLKGNST. 2 stretches are compositionally biased toward basic and acidic residues: residues 542–553 and 625–634; these read ETRDPGDGKGSP and KKSEKEEKPT. BRCT domains lie at 627-717 and 738-820; these read SEKE…PFEL and YQGT…NYQL.

As to quaternary structure, interacts with CDC27 and maybe other components of the APC/C complex. Interacts with histone variant H2AX under DNA damage conditions. As to expression, high levels of expression are found in the developing forebrain and, in particular, in the walls of the lateral ventricles.

It localises to the cytoplasm. It is found in the cytoskeleton. The protein resides in the microtubule organizing center. Its subcellular location is the centrosome. Functionally, implicated in chromosome condensation and DNA damage induced cellular responses. May play a role in neurogenesis and regulation of the size of the cerebral cortex. In Mus musculus (Mouse), this protein is Microcephalin.